The primary structure comprises 441 residues: tRNA modification GTPase MnmE (441 aa).

The (6S)-5-formyl-5,6,7,8-tetrahydrofolate site is built by Arg-21, Glu-79, and Lys-118. Positions 214 to 367 constitute a TrmE-type G domain; it reads GIHITILGAP…LVAELARVVE (154 aa). GTP is bound by residues 224 to 229, 243 to 249, and 268 to 271; these read NAGKSS, SAQAGTT, and DTAG. Residues Ser-228 and Thr-249 each contribute to the Mg(2+) site. Lys-441 serves as a coordination point for (6S)-5-formyl-5,6,7,8-tetrahydrofolate.

It belongs to the TRAFAC class TrmE-Era-EngA-EngB-Septin-like GTPase superfamily. TrmE GTPase family. In terms of assembly, homodimer. Heterotetramer of two MnmE and two MnmG subunits. K(+) serves as cofactor.

It localises to the cytoplasm. In terms of biological role, exhibits a very high intrinsic GTPase hydrolysis rate. Involved in the addition of a carboxymethylaminomethyl (cmnm) group at the wobble position (U34) of certain tRNAs, forming tRNA-cmnm(5)s(2)U34. This Paramagnetospirillum magneticum (strain ATCC 700264 / AMB-1) (Magnetospirillum magneticum) protein is tRNA modification GTPase MnmE.